Reading from the N-terminus, the 793-residue chain is Probable exo-1,4-beta-xylosidase xlnD (793 aa).

Positions Met1 to Gly20 are cleaved as a signal peptide. Residues Asn23, Asn87, and Asn142 are each glycosylated (N-linked (GlcNAc...) asparagine). The active site involves Asp310. Residues Asn326, Asn385, Asn404, Asn440, Asn477, Asn518, Asn559, Asn614, Asn652, Asn679, and Asn701 are each glycosylated (N-linked (GlcNAc...) asparagine).

This sequence belongs to the glycosyl hydrolase 3 family.

Its subcellular location is the secreted. The catalysed reaction is Hydrolysis of (1-&gt;4)-beta-D-xylans, to remove successive D-xylose residues from the non-reducing termini.. The protein operates within glycan degradation; xylan degradation. Functionally, xylan 1,4-beta-xylosidase involved in the hydrolysis of xylan, a major structural heterogeneous polysaccharide found in plant biomass representing the second most abundant polysaccharide in the biosphere, after cellulose. The polypeptide is Probable exo-1,4-beta-xylosidase xlnD (xlnD) (Aspergillus terreus (strain NIH 2624 / FGSC A1156)).